A 131-amino-acid chain; its full sequence is MAAKTVKKTRRRKERKNVEHGAAHIKSTFNNSIVTLTDAVGNALSWSSAGALGFRGSRKSTPFAAQMAAETAAKVAMEHGLKSIEVYVKGPGSGREAAIRSLQAAGLEVTLIKDVTPIPHNGCRPPKRRRV.

Positions M1–R15 are enriched in basic residues. The segment at M1–A23 is disordered.

Belongs to the universal ribosomal protein uS11 family. In terms of assembly, part of the 30S ribosomal subunit. Interacts with proteins S7 and S18. Binds to IF-3.

Functionally, located on the platform of the 30S subunit, it bridges several disparate RNA helices of the 16S rRNA. Forms part of the Shine-Dalgarno cleft in the 70S ribosome. This is Small ribosomal subunit protein uS11 from Clostridium beijerinckii (strain ATCC 51743 / NCIMB 8052) (Clostridium acetobutylicum).